A 191-amino-acid chain; its full sequence is GDP-mannose pyrophosphatase (191 aa).

GDP-alpha-D-mannose-binding positions include Tyr-17, 38–40 (KRE), Arg-67, and 85–87 (AGL). The Nudix hydrolase domain occupies 43–180 (DRGNGATILL…EIRDGKTVLL (138 aa)). Mg(2+)-binding residues include Ala-85, Glu-100, and Glu-104. A Nudix box motif is present at residues 86 to 106 (GLLDNDEPEVCIRKEAIEETG). GDP-alpha-D-mannose-binding positions include Glu-104, Glu-127, 150 to 151 (DE), and Lys-176. Glu-151 provides a ligand contact to Mg(2+).

It belongs to the Nudix hydrolase family. NudK subfamily. As to quaternary structure, homodimer. It depends on Mg(2+) as a cofactor.

The enzyme catalyses GDP-alpha-D-mannose + H2O = alpha-D-mannose 1-phosphate + GMP + 2 H(+). Nucleoside diphosphate sugar hydrolase that hydrolyzes GDP-mannose as its preferred substrate, yielding GMP and mannose-1-phosphate. In Escherichia coli (strain K12 / DH10B), this protein is GDP-mannose pyrophosphatase (nudK).